The primary structure comprises 504 residues: Maturase K (504 aa).

This sequence belongs to the intron maturase 2 family. MatK subfamily.

It is found in the plastid. The protein resides in the chloroplast. Its function is as follows. Usually encoded in the trnK tRNA gene intron. Probably assists in splicing its own and other chloroplast group II introns. This chain is Maturase K, found in Pachira aquatica (Guiana chestnut).